Consider the following 88-residue polypeptide: Small ribosomal subunit protein bS20 (88 aa).

The protein belongs to the bacterial ribosomal protein bS20 family.

In terms of biological role, binds directly to 16S ribosomal RNA. The protein is Small ribosomal subunit protein bS20 of Maricaulis maris (strain MCS10) (Caulobacter maris).